The sequence spans 636 residues: Chaperone protein HtpG (636 aa).

Residues 1–342 form an a; substrate-binding region; the sequence is MSSETLEFQA…AHDLSLNISR (342 aa). The interval 343-558 is b; that stretch reads ELLQQDRQIQ…AHDVTPTLEK (216 aa). A c region spans residues 559–636; that stretch reads MYRAMGHEVP…ILAERLARTL (78 aa).

This sequence belongs to the heat shock protein 90 family. As to quaternary structure, homodimer.

It is found in the cytoplasm. In terms of biological role, molecular chaperone. Has ATPase activity. In Salinispora tropica (strain ATCC BAA-916 / DSM 44818 / JCM 13857 / NBRC 105044 / CNB-440), this protein is Chaperone protein HtpG.